The primary structure comprises 394 residues: GDP-mannose transporter (394 aa).

The Cytoplasmic portion of the chain corresponds to 1-56 (MSNKKNEDIEMRAVEGANDFGGEKDPFLGRNSPVLRPRGREPTASAYFGKLDNSPG). The helical transmembrane segment at 57–77 (ASIIAYCLSSISMTVVNKYVV) threads the bilayer. Residues 78–81 (SGES) are Lumenal-facing. Residues 82 to 102 (WNLNFFYLGVQSLVCTIAILL) traverse the membrane as a helical segment. Topologically, residues 103 to 122 (SRQTGLIKNLAPFDSNKAKR) are cytoplasmic. The helical transmembrane segment at 123–145 (WFPVSLLLVSMIYTGANALQYLS) threads the bilayer. The Lumenal portion of the chain corresponds to 146–150 (VPVYT). The helical transmembrane segment at 151–168 (IFKNLTIIVIAYGEVLWF) threads the bilayer. Topologically, residues 169–174 (GGSVTP) are cytoplasmic. The helical transmembrane segment at 175–199 (LMLLSFGLMVLSSVVAAWADIQAAI) threads the bilayer. Residues 200 to 207 (DGVGHSAE) are Lumenal-facing. The chain crosses the membrane as a helical span at residues 208–228 (TSAALATLNAGYAWMGLNVVC). Residues 229-249 (TSSYLLGMRKVIKKMNFKDYD) lie on the Cytoplasmic side of the membrane. The helical transmembrane segment at 250–270 (SMFYNNLLTIPVLVVCSLLVE) threads the bilayer. Over 271–288 (DWSSENLAKNFPIETRNK) the chain is Lumenal. Residues 289–309 (LMVGMIYSGLAAIFISYCSAW) form a helical membrane-spanning segment. The Cytoplasmic portion of the chain corresponds to 310–317 (CIRVTSST). A helical transmembrane segment spans residues 318–338 (TYSMVGALNKLPIAISGLIFF). The Lumenal portion of the chain corresponds to 339 to 341 (DAP). Residues 342–362 (ITFGSITAIAVGFVSGLVFAW) form a helical membrane-spanning segment. The Cytoplasmic portion of the chain corresponds to 363-394 (AKVRQKAQEAGLLPTTKPTMSASAQSNRDANS).

Belongs to the TPT transporter family. SLC35D subfamily. As to quaternary structure, homooligomer.

Its subcellular location is the golgi apparatus membrane. The protein resides in the cytoplasmic vesicle membrane. It localises to the endoplasmic reticulum membrane. Involved in the import of GDP-mannose from the cytoplasm into the Golgi lumen. The protein is GDP-mannose transporter (VRG4) of Chaetomium globosum (strain ATCC 6205 / CBS 148.51 / DSM 1962 / NBRC 6347 / NRRL 1970) (Soil fungus).